A 321-amino-acid chain; its full sequence is 2-oxoglutarate-dependent dioxygenase frbH (321 aa).

The tract at residues 77–97 is disordered; the sequence is SRNSDTHGYEPVATSTGAQDD. A Fe2OG dioxygenase domain is found at 169–273; that stretch reads ESLSTLSMFR…RFSIAYFLRA (105 aa). H194, D196, and H251 together coordinate Fe cation. R264 serves as a coordination point for 2-oxoglutarate.

Belongs to the iron/ascorbate-dependent oxidoreductase family.

It participates in antifungal biosynthesis. In terms of biological role, 2-oxoglutarate-dependent dioxygenase; part of the gene cluster that mediates the biosynthesis of the antifungal antibiotic FR901469, an inhibitor of beta-1,3-glucansynthase, exerting antifungal activity against the pathogenes Candida albicans and Aspergillus fumigatus. FR901469 is a cyclic depsipeptide containing 12 amino acid residues and a fatty acid chain. The NRPS frbI contains 12 modules responsible for the formation of the depsipeptide backbone which is denoted as Acyl-Thr-Ala-Tyr-Val-4OHPro-Thr-Thr-3OHPro-threo3OHGln-Gly-Thr-Orn-OH (C71H116N14O23). The PKS frbB is probably involved in the production of the hydrocarbon chain, and the acyl-CoA ligase frbC might be involved in the transport of the chain to the peptide ptoduct of frbI. Because FR901469 contains 3 hydroxylated amino acid residues, the 3 oxygenases frbA, frbH, and frbJ might be participating in amino acid hydroxylation. As no thioesterase domains were detected in frbI or frbB, the thioesterases frbD and frbE may instead release and cyclize the products of the NRPS and PKS, respectively. In Dothideomycetidae sp. (strain 11243) (Fungal sp. (strain No.11243)), this protein is 2-oxoglutarate-dependent dioxygenase frbH.